The following is a 944-amino-acid chain: Thyroid peroxidase (944 aa).

The N-terminal stretch at 1–30 (MVGLVPAGSAWGGRALAVLGVTLLVALARG) is a signal peptide. The Extracellular segment spans residues 31–858 (LLPFFLGGRD…SGRLPKASLV (828 aa)). An N-linked (GlcNAc...) asparagine glycan is attached at N141. A disulfide bridge connects residues C154 and C170. A heme b-binding site is contributed by D250. Residue H251 is the Proton acceptor of the active site. D252 is a binding site for Ca(2+). 2 disulfides stabilise this stretch: C271–C281 and C275–C295. N316 is a glycosylation site (N-linked (GlcNAc...) asparagine). Residues T330, F332, D334, and S336 each coordinate Ca(2+). N351 is a glycosylation site (N-linked (GlcNAc...) asparagine). Residues E408 and H503 each contribute to the heme b site. Intrachain disulfides connect C606/C663, C704/C729, C750/C790, C776/C802, C808/C822, C816/C831, and C833/C846. N623 is a glycosylation site (N-linked (GlcNAc...) asparagine). The region spanning 748–804 (DACGLPDSLDNGDVVLCGEAGRRVLVFSCRHGFKLQGPEQVACSPRGGAVRAPVCRD) is the Sushi domain. The 44-residue stretch at 804–847 (DINECEDASHPPCHGSARCRNTKGGFRCECTDPAVLGEDGTTCV) folds into the EGF-like; calcium-binding domain. The chain crosses the membrane as a helical span at residues 859-879 (SIALGIVLVVGLAGLTWTLVC). Residues 880–944 (RWAHAGRKAS…RSHVAQGSPA (65 aa)) lie on the Cytoplasmic side of the membrane. A disordered region spans residues 895–944 (LGGRGAPPPGRGAGQDGASGSLVPPLGPQGRTRAVDPTSSRSHVAQGSPA). The span at 931–944 (PTSSRSHVAQGSPA) shows a compositional bias: polar residues.

Belongs to the peroxidase family. XPO subfamily. Interacts with DUOX1, DUOX2 and CYBA. Requires Ca(2+) as cofactor. The cofactor is heme b. In terms of processing, heme is covalently bound through a H(2)O(2)-dependent autocatalytic process. Heme insertion is important for the delivery of protein at the cell surface. Cleaved in its N-terminal part.

The protein localises to the membrane. The catalysed reaction is 2 iodide + H2O2 + 2 H(+) = diiodine + 2 H2O. It carries out the reaction [thyroglobulin]-L-tyrosine + iodide + H2O2 + H(+) = [thyroglobulin]-3-iodo-L-tyrosine + 2 H2O. It catalyses the reaction [thyroglobulin]-3-iodo-L-tyrosine + iodide + H2O2 + H(+) = [thyroglobulin]-3,5-diiodo-L-tyrosine + 2 H2O. The enzyme catalyses 2 [thyroglobulin]-3,5-diiodo-L-tyrosine + H2O2 = [thyroglobulin]-L-thyroxine + [thyroglobulin]-dehydroalanine + 2 H2O. The catalysed reaction is [thyroglobulin]-3-iodo-L-tyrosine + [thyroglobulin]-3,5-diiodo-L-tyrosine + H2O2 = [thyroglobulin]-3,3',5-triiodo-L-thyronine + [thyroglobulin]-dehydroalanine + 2 H2O. Its pathway is hormone biosynthesis; thyroid hormone biosynthesis. Its function is as follows. Iodination and coupling of the hormonogenic tyrosines in thyroglobulin to yield the thyroid hormones T(3) and T(4). The protein is Thyroid peroxidase (TPO) of Canis lupus familiaris (Dog).